A 438-amino-acid polypeptide reads, in one-letter code: tRNA-dihydrouridine(16/17) synthase [NAD(P)(+)]-like (438 aa).

FMN is bound by residues 23–25 (PMV) and glutamine 79. Residue cysteine 108 is the Proton donor of the active site. FMN-binding positions include lysine 147, histidine 175, 208–210 (NGN), and 232–233 (AE). Residues 343-387 (GPKEGSKENSSGRSKRALEEEEGSMEGLSKNKLKKQLRNPHKTFD) form a disordered region. Basic residues predominate over residues 373–383 (NKLKKQLRNPH).

It belongs to the Dus family. Dus1 subfamily. It depends on FMN as a cofactor.

It localises to the cytoplasm. The protein resides in the nucleus. It carries out the reaction 5,6-dihydrouridine(16) in tRNA + NADP(+) = uridine(16) in tRNA + NADPH + H(+). The catalysed reaction is 5,6-dihydrouridine(16) in tRNA + NAD(+) = uridine(16) in tRNA + NADH + H(+). It catalyses the reaction 5,6-dihydrouridine(17) in tRNA + NAD(+) = uridine(17) in tRNA + NADH + H(+). The enzyme catalyses 5,6-dihydrouridine(17) in tRNA + NADP(+) = uridine(17) in tRNA + NADPH + H(+). Catalyzes the synthesis of dihydrouridine, a modified base found in the D-loop of most tRNAs. Specifically modifies U16 and U17 in cytoplasmic tRNAs. Affects the level of some mature tRNA and thereby the total cellular translation. In Rattus norvegicus (Rat), this protein is tRNA-dihydrouridine(16/17) synthase [NAD(P)(+)]-like (Dus1l).